The primary structure comprises 317 residues: Probable porphobilinogen deaminase (317 aa).

Residue Cys234 is modified to S-(dipyrrolylmethanemethyl)cysteine.

It belongs to the HMBS family. Dipyrromethane serves as cofactor.

It catalyses the reaction 4 porphobilinogen + H2O = hydroxymethylbilane + 4 NH4(+). The protein operates within porphyrin-containing compound metabolism; protoporphyrin-IX biosynthesis; coproporphyrinogen-III from 5-aminolevulinate: step 2/4. Its function is as follows. Tetrapolymerization of the monopyrrole PBG into the hydroxymethylbilane pre-uroporphyrinogen in several discrete steps. The protein is Probable porphobilinogen deaminase of Methanosarcina acetivorans (strain ATCC 35395 / DSM 2834 / JCM 12185 / C2A).